Here is a 1118-residue protein sequence, read N- to C-terminus: Protein argonaute 1B (1118 aa).

Disordered regions lie at residues 1 to 175 (MALQ…SRTV) and 188 to 246 (APMV…RFPL). Positions 10–24 (PHHHQVPIMVKKKRT) are enriched in basic residues. Over residues 25-35 (GSGSTGESSGE) the composition is skewed to low complexity. 3 stretches are compositionally biased toward gly residues: residues 54–92 (QHGGGRGWVPQHGGRGGGQYQGRGGHYQGRGGQGSHHPG), 100–110 (GRGGPGSHHPG), and 118–128 (GRGGSGSHHPG). Low complexity-rich tracts occupy residues 148 to 157 (RGGMPQPYYG) and 193 to 219 (PTPSGAGSSSQPAAEVSSGQVQQQFQQ). Positions 220 to 241 (LATRDQSSTSQAIQIAPPSSKS) are enriched in polar residues. In terms of domain architecture, PAZ spans 457–570 (PVIDFVAQLL…LPMEVCKIVE (114 aa)). One can recognise a Piwi domain in the interval 746–1067 (LLIVILPDNN…AAFRARFYME (322 aa)).

Belongs to the argonaute family. Ago subfamily.

Probably involved in the RNA silencing pathway. May bind to short RNAs such as microRNAs (miRNAs) or short interfering RNAs (siRNAs), and represses the translation of mRNAs which are complementary to them. This is Protein argonaute 1B (AGO1B) from Oryza sativa subsp. japonica (Rice).